The primary structure comprises 517 residues: Bifunctional purine biosynthesis protein PurH (517 aa).

An MGS-like domain is found at 1 to 146 (MGRLVLLSVS…KNFAHLTVLC (146 aa)).

The protein belongs to the PurH family.

It carries out the reaction (6R)-10-formyltetrahydrofolate + 5-amino-1-(5-phospho-beta-D-ribosyl)imidazole-4-carboxamide = 5-formamido-1-(5-phospho-D-ribosyl)imidazole-4-carboxamide + (6S)-5,6,7,8-tetrahydrofolate. It catalyses the reaction IMP + H2O = 5-formamido-1-(5-phospho-D-ribosyl)imidazole-4-carboxamide. It participates in purine metabolism; IMP biosynthesis via de novo pathway; 5-formamido-1-(5-phospho-D-ribosyl)imidazole-4-carboxamide from 5-amino-1-(5-phospho-D-ribosyl)imidazole-4-carboxamide (10-formyl THF route): step 1/1. The protein operates within purine metabolism; IMP biosynthesis via de novo pathway; IMP from 5-formamido-1-(5-phospho-D-ribosyl)imidazole-4-carboxamide: step 1/1. The protein is Bifunctional purine biosynthesis protein PurH of Gloeothece citriformis (strain PCC 7424) (Cyanothece sp. (strain PCC 7424)).